Here is a 451-residue protein sequence, read N- to C-terminus: Trimethylamine monooxygenase (451 aa).

6 residues coordinate FAD: serine 12, glutamate 37, glutamine 39, leucine 45, tryptophan 46, and histidine 62. Residues tryptophan 70 and asparagine 72 each contribute to the NADP(+) site. Asparagine 72 and valine 125 together coordinate FAD. NADP(+)-binding residues include serine 204, serine 205, serine 207, and arginine 228. Positions 317 and 320 each coordinate FAD. NADP(+) is bound at residue arginine 411.

The protein belongs to the FMO family. It depends on FAD as a cofactor.

It catalyses the reaction trimethylamine + NADPH + O2 = trimethylamine N-oxide + NADP(+) + H2O. Functionally, catalyzes the oxidation of trimethylamine (TMA) to produce trimethylamine N-oxide (TMAO). In vitro, has a broad substrate specificity, oxidizing many nitrogen- and sulfur-containing compounds, including dimethylamine (DMA), dimethylsulfide (DMS), dimethylsulfoxide (DMSO), cysteamine, methimazole and dimethylaniline. The protein is Trimethylamine monooxygenase of Methylocella silvestris (strain DSM 15510 / CIP 108128 / LMG 27833 / NCIMB 13906 / BL2).